We begin with the raw amino-acid sequence, 157 residues long: SsrA-binding protein (157 aa).

Basic and acidic residues predominate over residues 136-151 (KRETEKKRDWSREKGR). Residues 136–157 (KRETEKKRDWSREKGRLLRARG) are disordered.

The protein belongs to the SmpB family.

Its subcellular location is the cytoplasm. Its function is as follows. Required for rescue of stalled ribosomes mediated by trans-translation. Binds to transfer-messenger RNA (tmRNA), required for stable association of tmRNA with ribosomes. tmRNA and SmpB together mimic tRNA shape, replacing the anticodon stem-loop with SmpB. tmRNA is encoded by the ssrA gene; the 2 termini fold to resemble tRNA(Ala) and it encodes a 'tag peptide', a short internal open reading frame. During trans-translation Ala-aminoacylated tmRNA acts like a tRNA, entering the A-site of stalled ribosomes, displacing the stalled mRNA. The ribosome then switches to translate the ORF on the tmRNA; the nascent peptide is terminated with the 'tag peptide' encoded by the tmRNA and targeted for degradation. The ribosome is freed to recommence translation, which seems to be the essential function of trans-translation. This Rhodopseudomonas palustris (strain HaA2) protein is SsrA-binding protein.